The following is a 344-amino-acid chain: Dihydroorotase (344 aa).

2 residues coordinate Zn(2+): histidine 13 and histidine 15. Substrate-binding positions include 15-17 and asparagine 41; that span reads HFR. Residues lysine 98, histidine 135, and histidine 173 each contribute to the Zn(2+) site. An N6-carboxylysine modification is found at lysine 98. Position 135 (histidine 135) interacts with substrate. Leucine 218 lines the substrate pocket. Aspartate 246 lines the Zn(2+) pocket. Aspartate 246 is a catalytic residue. Residues histidine 250 and alanine 262 each contribute to the substrate site.

It belongs to the metallo-dependent hydrolases superfamily. DHOase family. Class II DHOase subfamily. Homodimer. Zn(2+) serves as cofactor.

The catalysed reaction is (S)-dihydroorotate + H2O = N-carbamoyl-L-aspartate + H(+). It participates in pyrimidine metabolism; UMP biosynthesis via de novo pathway; (S)-dihydroorotate from bicarbonate: step 3/3. Its function is as follows. Catalyzes the reversible cyclization of carbamoyl aspartate to dihydroorotate. The sequence is that of Dihydroorotase from Shewanella woodyi (strain ATCC 51908 / MS32).